Reading from the N-terminus, the 216-residue chain is Cytochrome c biogenesis ATP-binding export protein CcmA (216 aa).

In terms of domain architecture, ABC transporter spans 5-216 (ISVDTLLSAS…RKIRLDYRFV (212 aa)). 43–50 (GPNGAGKT) is a binding site for ATP.

It belongs to the ABC transporter superfamily. CcmA exporter (TC 3.A.1.107) family. The complex is composed of two ATP-binding proteins (CcmA) and two transmembrane proteins (CcmB).

It is found in the cell inner membrane. The enzyme catalyses heme b(in) + ATP + H2O = heme b(out) + ADP + phosphate + H(+). Part of the ABC transporter complex CcmAB involved in the biogenesis of c-type cytochromes; once thought to export heme, this seems not to be the case, but its exact role is uncertain. Responsible for energy coupling to the transport system. This is Cytochrome c biogenesis ATP-binding export protein CcmA from Shewanella oneidensis (strain ATCC 700550 / JCM 31522 / CIP 106686 / LMG 19005 / NCIMB 14063 / MR-1).